The sequence spans 160 residues: Transcriptional repressor NrdR (160 aa).

Polar residues predominate over residues 1 to 11; that stretch reads MRCPSCNSLDT. The segment at 1-20 is disordered; the sequence is MRCPSCNSLDTQVKDSRPTE. The segment at 3–34 is a zinc-finger region; that stretch reads CPSCNSLDTQVKDSRPTEDSAVIRRRRVCMAC. Positions 49–139 constitute an ATP-cone domain; it reads LTVIKRNGRR…VYRNFREAKD (91 aa).

This sequence belongs to the NrdR family. The cofactor is Zn(2+).

Negatively regulates transcription of bacterial ribonucleotide reductase nrd genes and operons by binding to NrdR-boxes. The protein is Transcriptional repressor NrdR of Nitrobacter winogradskyi (strain ATCC 25391 / DSM 10237 / CIP 104748 / NCIMB 11846 / Nb-255).